The chain runs to 272 residues: Testis-specific gene 13 protein (272 aa).

In Bos taurus (Bovine), this protein is Testis-specific gene 13 protein (TSGA13).